The sequence spans 99 residues: ATP synthase subunit c (99 aa).

The next 2 membrane-spanning stretches (helical) occupy residues 23–43 (GAGI…IGAL) and 78–98 (MGIA…LIFV).

This sequence belongs to the ATPase C chain family. F-type ATPases have 2 components, F(1) - the catalytic core - and F(0) - the membrane proton channel. F(1) has five subunits: alpha(3), beta(3), gamma(1), delta(1), epsilon(1). F(0) has three main subunits: a(1), b(2) and c(10-14). The alpha and beta chains form an alternating ring which encloses part of the gamma chain. F(1) is attached to F(0) by a central stalk formed by the gamma and epsilon chains, while a peripheral stalk is formed by the delta and b chains.

It is found in the cell membrane. F(1)F(0) ATP synthase produces ATP from ADP in the presence of a proton or sodium gradient. F-type ATPases consist of two structural domains, F(1) containing the extramembraneous catalytic core and F(0) containing the membrane proton channel, linked together by a central stalk and a peripheral stalk. During catalysis, ATP synthesis in the catalytic domain of F(1) is coupled via a rotary mechanism of the central stalk subunits to proton translocation. In terms of biological role, key component of the F(0) channel; it plays a direct role in translocation across the membrane. A homomeric c-ring of between 10-14 subunits forms the central stalk rotor element with the F(1) delta and epsilon subunits. This is ATP synthase subunit c from Mycoplasma mobile (strain ATCC 43663 / 163K / NCTC 11711) (Mesomycoplasma mobile).